The chain runs to 624 residues: E3 ubiquitin-protein ligase RLIM (624 aa).

Position 1 is an N-acetylmethionine (M1). Positions M1 to S11 are enriched in basic and acidic residues. Disordered regions lie at residues M1–R25, K72–F251, N257–S276, T291–F363, and S424–E522. Over residues S104–S132 the composition is skewed to polar residues. Positions N142–E153 are enriched in low complexity. S164 bears the Phosphoserine mark. The segment covering G165–P188 has biased composition (polar residues). 4 positions are modified to phosphoserine: S195, S228, S230, and S276. Residues R214–R229 are compositionally biased toward basic and acidic residues. Over residues T291 to R315 the composition is skewed to polar residues. A compositionally biased stretch (basic and acidic residues) spans R329 to I339. Residues A340–Y356 show a composition bias toward polar residues. The segment covering G445–S454 has biased composition (gly residues). Positions S455–G507 are enriched in low complexity. The RING-type zinc finger occupies C570–R611. The short motif at E621–V624 is the PDZ-binding element.

Belongs to the RNF12 family. In terms of assembly, interacts with LIM/homeobox factors such as LHX3. Interacts with LDB1, LDB2 and SIN3A. Interacts with LIMK1. Interacts (via N-terminus) with TERF1. Interacts (via C-terminus) with ESR1. As to expression, expressed in many tissues.

It localises to the nucleus. The enzyme catalyses S-ubiquitinyl-[E2 ubiquitin-conjugating enzyme]-L-cysteine + [acceptor protein]-L-lysine = [E2 ubiquitin-conjugating enzyme]-L-cysteine + N(6)-ubiquitinyl-[acceptor protein]-L-lysine.. The protein operates within protein modification; protein ubiquitination. E3 ubiquitin-protein ligase. Acts as a negative coregulator for LIM homeodomain transcription factors by mediating the ubiquitination and subsequent degradation of LIM cofactors LDB1 and LDB2 and by mediating the recruitment the SIN3a/histone deacetylase corepressor complex. Ubiquitination and degradation of LIM cofactors LDB1 and LDB2 allows DNA-bound LIM homeodomain transcription factors to interact with other protein partners such as RLIM. Plays a role in telomere length-mediated growth suppression by mediating the ubiquitination and degradation of TERF1. By targeting ZFP42 for degradation, acts as an activator of random inactivation of X chromosome in the embryo, a stochastic process in which one X chromosome is inactivated to minimize sex-related dosage differences of X-encoded genes in somatic cells of female placental mammals. In Homo sapiens (Human), this protein is E3 ubiquitin-protein ligase RLIM (RLIM).